The primary structure comprises 557 residues: Formate--tetrahydrofolate ligase 2 (557 aa).

66 to 73 (TPAGEGKT) contributes to the ATP binding site.

This sequence belongs to the formate--tetrahydrofolate ligase family.

It catalyses the reaction (6S)-5,6,7,8-tetrahydrofolate + formate + ATP = (6R)-10-formyltetrahydrofolate + ADP + phosphate. The protein operates within one-carbon metabolism; tetrahydrofolate interconversion. This Streptococcus pyogenes serotype M28 (strain MGAS6180) protein is Formate--tetrahydrofolate ligase 2.